A 234-amino-acid polypeptide reads, in one-letter code: Transcriptional activator protein TraR (234 aa).

The HTH luxR-type domain occupies 167–232 (TAEDAAWLDP…HLTALAIKRK (66 aa)). A DNA-binding region (H-T-H motif) is located at residues 191–210 (MEEIADVEEVKYNSVRVKLR).

It belongs to the autoinducer-regulated transcriptional regulatory protein family.

Its function is as follows. Positive regulation of conjugal transfer of Ti plasmids. This Agrobacterium vitis (Rhizobium vitis) protein is Transcriptional activator protein TraR (traR).